A 119-amino-acid polypeptide reads, in one-letter code: Large ribosomal subunit protein bL17 (119 aa).

The protein belongs to the bacterial ribosomal protein bL17 family. Part of the 50S ribosomal subunit. Contacts protein L32.

The chain is Large ribosomal subunit protein bL17 from Ureaplasma parvum serovar 3 (strain ATCC 27815 / 27 / NCTC 11736).